The following is a 471-amino-acid chain: Rho GTPase-activating protein 15 (471 aa).

The interval 1-20 (MQKSTNSDIPVETLNPTRQG) is disordered. Residue Ser-43 is modified to Phosphoserine. Residues 79–189 (MVEKEGYLQK…WFHAIKNAID (111 aa)) enclose the PH domain. Ser-196, Ser-199, and Ser-243 each carry phosphoserine. Positions 281 to 470 (SHLHTLCERE…LMLSAYDQIF (190 aa)) constitute a Rho-GAP domain.

It localises to the cytoplasm. The protein localises to the membrane. Functionally, GTPase activator for the Rho-type GTPases by converting them to an inactive GDP-bound state. Has activity toward RAC1. Overexpression results in an increase in actin stress fibers and cell contraction. In Bos taurus (Bovine), this protein is Rho GTPase-activating protein 15 (ARHGAP15).